The primary structure comprises 488 residues: Malonate-semialdehyde dehydrogenase (488 aa).

Residues Ala150, Phe152, Lys176, Glu179, Arg180, Ser229, and Thr251 each coordinate NAD(+). Cys284 (nucleophile) is an active-site residue. Glu382 is an NAD(+) binding site.

Belongs to the aldehyde dehydrogenase family. IolA subfamily. Homotetramer.

The enzyme catalyses 3-oxopropanoate + NAD(+) + CoA + H2O = hydrogencarbonate + acetyl-CoA + NADH + H(+). It catalyses the reaction 2-methyl-3-oxopropanoate + NAD(+) + CoA + H2O = propanoyl-CoA + hydrogencarbonate + NADH + H(+). The protein operates within polyol metabolism; myo-inositol degradation into acetyl-CoA; acetyl-CoA from myo-inositol: step 7/7. Its function is as follows. Catalyzes the oxidation of malonate semialdehyde (MSA) and methylmalonate semialdehyde (MMSA) into acetyl-CoA and propanoyl-CoA, respectively. Is involved in a myo-inositol catabolic pathway. Bicarbonate, and not CO2, is the end-product of the enzymatic reaction. The chain is Malonate-semialdehyde dehydrogenase from Listeria innocua serovar 6a (strain ATCC BAA-680 / CLIP 11262).